The following is a 101-amino-acid chain: Large ribosomal subunit protein bL25 (101 aa).

This sequence belongs to the bacterial ribosomal protein bL25 family. As to quaternary structure, part of the 50S ribosomal subunit; part of the 5S rRNA/L5/L18/L25 subcomplex. Contacts the 5S rRNA. Binds to the 5S rRNA independently of L5 and L18.

This is one of the proteins that binds to the 5S RNA in the ribosome where it forms part of the central protuberance. The chain is Large ribosomal subunit protein bL25 from Thermosynechococcus vestitus (strain NIES-2133 / IAM M-273 / BP-1).